Reading from the N-terminus, the 339-residue chain is MTRISLTRYLVEEQRKHNTIQPELRLLIEVVARACKAISNSVNKGALAGVLGSAGTGNVQGETQQKLDVIANEVLLDANEWGGHLAAMASEEMESFYEIPNRYPKGEYLLMFDPLDGSSNIDVNVSIGTIFSVLHMPKPGQTVTEADFLQPGTHQVAAGYAVYGPQTTLVLTVGNGVHVFTLDREAGSFVLTQSDVQIPEDTKEFAINMSNMRHWAPPVRKYIDECLAGDEGPRGKNFNMRWIASMVADVHRILTRGGIFMYPWDKREPEKAGKLRLMYEANPMAMLIEQAGGAATNGHIRILDVQPEKLHQRVSVILGSKNEVERVTRYHHEAAGQQG.

Positions 91, 113, 115, and 116 each coordinate Mg(2+). Substrate-binding positions include 116 to 119, Asn-208, and Lys-274; that span reads DGSS. Residue Glu-280 participates in Mg(2+) binding.

It belongs to the FBPase class 1 family. Homotetramer. Mg(2+) serves as cofactor.

It is found in the cytoplasm. The catalysed reaction is beta-D-fructose 1,6-bisphosphate + H2O = beta-D-fructose 6-phosphate + phosphate. It participates in carbohydrate biosynthesis; gluconeogenesis. In Cupriavidus pinatubonensis (strain JMP 134 / LMG 1197) (Cupriavidus necator (strain JMP 134)), this protein is Fructose-1,6-bisphosphatase class 1.